The following is a 486-amino-acid chain: Cobyric acid synthase (486 aa).

In terms of domain architecture, GATase cobBQ-type spans 251 to 439 (RAKIVVPMLS…VHGLFERGEA (189 aa)). C333 serves as the catalytic Nucleophile. Residue H431 is part of the active site.

Belongs to the CobB/CobQ family. CobQ subfamily.

Its pathway is cofactor biosynthesis; adenosylcobalamin biosynthesis. Its function is as follows. Catalyzes amidations at positions B, D, E, and G on adenosylcobyrinic A,C-diamide. NH(2) groups are provided by glutamine, and one molecule of ATP is hydrogenolyzed for each amidation. This chain is Cobyric acid synthase, found in Caulobacter sp. (strain K31).